A 527-amino-acid chain; its full sequence is Inorganic phosphate transporter 1-1 (527 aa).

Residues 1 to 21 are Cytoplasmic-facing; the sequence is MAGGQLNVLSTLDQAKTQWYH. The helical transmembrane segment at 22–42 threads the bilayer; the sequence is FMAIVIAGMGFFTDAYDLFCI. Topologically, residues 43–70 are extracellular; sequence SLVTKLLGRIYYTDDSKDTPGALPPNVS. The helical transmembrane segment at 71-91 threads the bilayer; sequence AAVTGVALCGTLAGQLFFGWL. Residues 92-99 are Cytoplasmic-facing; it reads GDKLGRKS. Residues 100–120 traverse the membrane as a helical segment; sequence VYGFTLILMVVCSVASGLSFG. At 121-124 the chain is on the extracellular side; that stretch reads SSAK. A helical membrane pass occupies residues 125–145; it reads GVVSTLCFFRFWLGFGIGGDY. The Cytoplasmic portion of the chain corresponds to 146–163; it reads PLSATIMSEYANKRTRGA. The helical transmembrane segment at 164–184 threads the bilayer; sequence FIAAVFAMQGFGILFGAIVAL. Residues 185–211 lie on the Extracellular side of the membrane; it reads AVSAGFRHAYPAPSYSDNHAASLVPQA. The chain crosses the membrane as a helical span at residues 212 to 232; the sequence is DYVWRIILMFGTVPAALTYYW. The Cytoplasmic portion of the chain corresponds to 233–292; that stretch reads RMKMPETARYTALIARNAKQAAADMSKVLHTQIEESADRAETVAVGGESWGLFSRQFLRR. Residues 293 to 313 form a helical membrane-spanning segment; it reads HGLHLLATTSTWFLLDIAFYS. Over 314–348 the chain is Extracellular; that stretch reads QNLFQKDIFSKVGWIPPAKTMNALEELYRIARAQA. The helical transmembrane segment at 349–369 threads the bilayer; sequence LIALCGTIPGYWFTVAFIEIM. Topologically, residues 370-371 are cytoplasmic; the sequence is GR. The helical transmembrane segment at 372–392 threads the bilayer; that stretch reads FWIQIMGFAMMTAFMLGLAIP. The Extracellular portion of the chain corresponds to 393–405; it reads YHHWTTPGHHTGF. A helical membrane pass occupies residues 406–426; sequence IVMYGFTFFFANFGPNSTTFI. Residues 427-442 are Cytoplasmic-facing; sequence VPAEIYPARLRSTCHG. A helical membrane pass occupies residues 443–463; it reads ISAAAGKAGAIIGAFGFLYAA. Over 464–481 the chain is Extracellular; it reads QDQHKPEPGYPRGIGIKN. Residues 482–502 traverse the membrane as a helical segment; that stretch reads ALFVLAGTNFLGTIMTLLVPE. At 503 to 527 the chain is on the cytoplasmic side; sequence SKGMSLEVISQEVADGDDEEAAYPK.

Belongs to the major facilitator superfamily. Phosphate:H(+) symporter (TC 2.A.1.9) family. As to expression, expressed in roots, stems and leaves.

The protein resides in the membrane. Its function is as follows. High-affinity transporter for external inorganic phosphate. Required for phosphate acquisition in plant. This chain is Inorganic phosphate transporter 1-1 (PHT1-1), found in Oryza sativa subsp. japonica (Rice).